The chain runs to 267 residues: Glutamate racemase (267 aa).

Substrate is bound by residues 9-10 (DS) and 41-42 (YS). Residue C73 is the Proton donor/acceptor of the active site. 74–75 (NT) is a binding site for substrate. Catalysis depends on C184, which acts as the Proton donor/acceptor. 185–186 (TH) is a substrate binding site.

Belongs to the aspartate/glutamate racemases family.

The catalysed reaction is L-glutamate = D-glutamate. It functions in the pathway cell wall biogenesis; peptidoglycan biosynthesis. Its function is as follows. Provides the (R)-glutamate required for cell wall biosynthesis. The sequence is that of Glutamate racemase from Glaesserella parasuis serovar 5 (strain SH0165) (Haemophilus parasuis).